A 335-amino-acid chain; its full sequence is MIEKIWFHRHPLGYLLWPLLWPFSVLFGVISRSRRKAYQTGDKPSYRAPLPVVVVGNITAGGNGKTPVVVWLVETLQNLGYRPGVVSRGYGAKAPSYPLVVNEQTPAQHCGDEPKLIFQRTKAPVAVDPVRSQAVKALLEHGVNVIVTDDGLQHYALQRDIEIAVVDGVRRFGNQELIPLGPLREPVSRLDEVDFIITNGGVAKANEIAMRLQPTDAVNLKTGERCAVSKLTRLCAMAGIGHPSRFFNTLRELNADLVHCQGFADHQAFDAAQLNQLAQQGDHLIMTEKDAVKCAEFAQPNWWYLPVSAQFAPEAEQRIVDKIKEVMEPYGSPSA.

59 to 66 lines the ATP pocket; sequence TAGGNGKT.

It belongs to the LpxK family.

The catalysed reaction is a lipid A disaccharide + ATP = a lipid IVA + ADP + H(+). Its pathway is glycolipid biosynthesis; lipid IV(A) biosynthesis; lipid IV(A) from (3R)-3-hydroxytetradecanoyl-[acyl-carrier-protein] and UDP-N-acetyl-alpha-D-glucosamine: step 6/6. In terms of biological role, transfers the gamma-phosphate of ATP to the 4'-position of a tetraacyldisaccharide 1-phosphate intermediate (termed DS-1-P) to form tetraacyldisaccharide 1,4'-bis-phosphate (lipid IVA). The polypeptide is Tetraacyldisaccharide 4'-kinase (Vibrio cholerae serotype O1 (strain ATCC 39541 / Classical Ogawa 395 / O395)).